The following is a 134-amino-acid chain: UPF0719 transmembrane protein YshE (134 aa).

The next 4 helical transmembrane spans lie at 10–30 (VEIAAYYSVAVLCLVLFLTVF), 48–68 (AVAMATGGKILGIANVFQHSI), 78–98 (IGWGVYGFVMLLISYFIFEFL), and 114–134 (AVGFISFVISVGLSFVVAAGI).

It belongs to the UPF0719 family.

The protein resides in the cell membrane. This chain is UPF0719 transmembrane protein YshE (yshE), found in Bacillus subtilis (strain 168).